Reading from the N-terminus, the 226-residue chain is MNENLFASFITPTILGISILPLIMIFPCLLFSAPNRWMPNRLVALQLWLVRMVTKQMMSMHNKQGRMWTLMLITLIMFIASTNLLGLLPYTFTPTTQLSMNMGMAVPLWLGTVLMGFRNKPKSSLAHFLPQGTPTPLIPMLIIIETISLFIQPVALAVRLTANITAGHLLIHLIGSATLALSSISLTVSTITFTILFLLTILEIAVALIQAYVFTLLVSLYLHDNT.

6 helical membrane passes run 14-34 (ILGI…FSAP), 68-88 (WTLM…LGLL), 97-117 (QLSM…LMGF), 138-158 (IPML…ALAV), 164-184 (ITAG…LSSI), and 193-213 (FTIL…QAYV).

This sequence belongs to the ATPase A chain family. In terms of assembly, component of the ATP synthase complex composed at least of ATP5F1A/subunit alpha, ATP5F1B/subunit beta, ATP5MC1/subunit c (homooctomer), MT-ATP6/subunit a, MT-ATP8/subunit 8, ATP5ME/subunit e, ATP5MF/subunit f, ATP5MG/subunit g, ATP5MK/subunit k, ATP5MJ/subunit j, ATP5F1C/subunit gamma, ATP5F1D/subunit delta, ATP5F1E/subunit epsilon, ATP5PF/subunit F6, ATP5PB/subunit b, ATP5PD/subunit d, ATP5PO/subunit OSCP. ATP synthase complex consists of a soluble F(1) head domain (subunits alpha(3) and beta(3)) - the catalytic core - and a membrane F(0) domain - the membrane proton channel (subunits c, a, 8, e, f, g, k and j). These two domains are linked by a central stalk (subunits gamma, delta, and epsilon) rotating inside the F1 region and a stationary peripheral stalk (subunits F6, b, d, and OSCP). Interacts with DNAJC30; interaction is direct.

The protein resides in the mitochondrion inner membrane. The enzyme catalyses H(+)(in) = H(+)(out). Subunit a, of the mitochondrial membrane ATP synthase complex (F(1)F(0) ATP synthase or Complex V) that produces ATP from ADP in the presence of a proton gradient across the membrane which is generated by electron transport complexes of the respiratory chain. ATP synthase complex consist of a soluble F(1) head domain - the catalytic core - and a membrane F(1) domain - the membrane proton channel. These two domains are linked by a central stalk rotating inside the F(1) region and a stationary peripheral stalk. During catalysis, ATP synthesis in the catalytic domain of F(1) is coupled via a rotary mechanism of the central stalk subunits to proton translocation. With the subunit c (ATP5MC1), forms the proton-conducting channel in the F(0) domain, that contains two crucial half-channels (inlet and outlet) that facilitate proton movement from the mitochondrial intermembrane space (IMS) into the matrix. Protons are taken up via the inlet half-channel and released through the outlet half-channel, following a Grotthuss mechanism. This is ATP synthase F(0) complex subunit a from Tachyglossus aculeatus aculeatus (Southeast Australian short-beaked echidna).